A 276-amino-acid polypeptide reads, in one-letter code: Probable ABC transporter permease protein NosY (276 aa).

6 helical membrane passes run 20-40 (WLLA…WLGA), 55-75 (IASL…LLAY), 111-131 (ILAL…ALLV), 146-166 (FMIS…VLSG), 179-199 (LGVW…LLVL), and 251-271 (VLWL…YAIF).

The complex may be composed of an ATP-binding protein (NosF), a transmembrane protein (NosY) and a solute-binding protein (NosD).

It localises to the cell inner membrane. In terms of biological role, required for the assembly of the copper chromophores of nitrous oxide reductase. Could be part of the ABC transporter complex NosDFY. The chain is Probable ABC transporter permease protein NosY from Stutzerimonas stutzeri (Pseudomonas stutzeri).